Reading from the N-terminus, the 153-residue chain is Nucleoside diphosphate kinase (153 aa).

Positions 12, 60, 88, 94, 105, and 115 each coordinate ATP. The active-site Pros-phosphohistidine intermediate is His-118.

It belongs to the NDK family. Requires Mg(2+) as cofactor.

It is found in the cytoplasm. It catalyses the reaction a 2'-deoxyribonucleoside 5'-diphosphate + ATP = a 2'-deoxyribonucleoside 5'-triphosphate + ADP. The catalysed reaction is a ribonucleoside 5'-diphosphate + ATP = a ribonucleoside 5'-triphosphate + ADP. In terms of biological role, major role in the synthesis of nucleoside triphosphates other than ATP. The ATP gamma phosphate is transferred to the NDP beta phosphate via a ping-pong mechanism, using a phosphorylated active-site intermediate. The polypeptide is Nucleoside diphosphate kinase (Natronomonas pharaonis (strain ATCC 35678 / DSM 2160 / CIP 103997 / JCM 8858 / NBRC 14720 / NCIMB 2260 / Gabara) (Halobacterium pharaonis)).